Consider the following 635-residue polypeptide: Threonine--tRNA ligase (635 aa).

One can recognise a TGS domain in the interval 1 to 61 (MITVRLPDGS…EKDSDLAIIT (61 aa)). The tract at residues 242-533 (DHRKLGKQLD…LIEHYAGALP (292 aa)) is catalytic. Cys333, His384, and His510 together coordinate Zn(2+).

It belongs to the class-II aminoacyl-tRNA synthetase family. Homodimer. Requires Zn(2+) as cofactor.

The protein localises to the cytoplasm. The enzyme catalyses tRNA(Thr) + L-threonine + ATP = L-threonyl-tRNA(Thr) + AMP + diphosphate + H(+). Catalyzes the attachment of threonine to tRNA(Thr) in a two-step reaction: L-threonine is first activated by ATP to form Thr-AMP and then transferred to the acceptor end of tRNA(Thr). Also edits incorrectly charged L-seryl-tRNA(Thr). In Janthinobacterium sp. (strain Marseille) (Minibacterium massiliensis), this protein is Threonine--tRNA ligase.